Reading from the N-terminus, the 729-residue chain is Fatty acid oxidation complex subunit alpha (729 aa).

The enoyl-CoA hydratase/isomerase stretch occupies residues 1–189 (MLYKGDTLYL…KIGLVDGVVK (189 aa)). D296 provides a ligand contact to substrate. The segment at 311-729 (ETPKQAAVLG…ARPVGSLKTA (419 aa)) is 3-hydroxyacyl-CoA dehydrogenase. NAD(+) is bound by residues M324, D343, 400-402 (VVE), K407, and S429. H450 functions as the For 3-hydroxyacyl-CoA dehydrogenase activity in the catalytic mechanism. N453 lines the NAD(+) pocket. Substrate-binding residues include N500 and Y660. Residues 708–729 (RHNEPYYPPVEPARPVGSLKTA) are disordered.

It in the N-terminal section; belongs to the enoyl-CoA hydratase/isomerase family. In the C-terminal section; belongs to the 3-hydroxyacyl-CoA dehydrogenase family. Heterotetramer of two alpha chains (FadB) and two beta chains (FadA).

It carries out the reaction a (3S)-3-hydroxyacyl-CoA + NAD(+) = a 3-oxoacyl-CoA + NADH + H(+). The catalysed reaction is a (3S)-3-hydroxyacyl-CoA = a (2E)-enoyl-CoA + H2O. The enzyme catalyses a 4-saturated-(3S)-3-hydroxyacyl-CoA = a (3E)-enoyl-CoA + H2O. It catalyses the reaction (3S)-3-hydroxybutanoyl-CoA = (3R)-3-hydroxybutanoyl-CoA. It carries out the reaction a (3Z)-enoyl-CoA = a 4-saturated (2E)-enoyl-CoA. The catalysed reaction is a (3E)-enoyl-CoA = a 4-saturated (2E)-enoyl-CoA. It functions in the pathway lipid metabolism; fatty acid beta-oxidation. Functionally, involved in the aerobic and anaerobic degradation of long-chain fatty acids via beta-oxidation cycle. Catalyzes the formation of 3-oxoacyl-CoA from enoyl-CoA via L-3-hydroxyacyl-CoA. It can also use D-3-hydroxyacyl-CoA and cis-3-enoyl-CoA as substrate. The protein is Fatty acid oxidation complex subunit alpha of Salmonella enteritidis PT4 (strain P125109).